Here is a 246-residue protein sequence, read N- to C-terminus: MSFRGGRGGGGGGGFRGGRGGGGGGGFRGGRGGDRGGGGFRGGRGGGGRGGFGGGGRGGYDQGPPEEVVLVGVFSHKCQDDIVCNNTSGKIPYFNAPIYFENKEQVGKIDEIFGSPGENGFSVTLSQGVKASSFKSGSELYIDPGKLLPVERFLPQVGGGRGRGGRGRGGDRGRGGDRGRGGFGGRGGGGGGFRGGSRGGFGGGDRGGFRGGRGGDFGGRGRGGDFKRSYDGGGYGGNSNKRTKFD.

Disordered regions lie at residues 1 to 61 and 155 to 246; these read MSFR…GGYD and PQVG…TKFD. RGG-box regions lie at residues 4 to 59 and 161 to 223; these read RGGR…GRGG and RGRG…RGRG. Positions 168–180 are enriched in basic and acidic residues; the sequence is RGGDRGRGGDRGR. Gly residues predominate over residues 181 to 221; the sequence is GGFGGRGGGGGGFRGGSRGGFGGGDRGGFRGGRGGDFGGRG.

It belongs to the GAR1 family. In terms of assembly, component of the small nucleolar ribonucleoprotein particle containing H/ACA-type snoRNAs (H/ACA snoRNPs).

Its subcellular location is the nucleus. The protein resides in the nucleolus. In terms of biological role, required for ribosome biogenesis. Part of a complex which catalyzes pseudouridylation of rRNA. This involves the isomerization of uridine such that the ribose is subsequently attached to C5, instead of the normal N1. Pseudouridine ('psi') residues may serve to stabilize the conformation of rRNAs. The polypeptide is Probable H/ACA ribonucleoprotein complex subunit 1-like protein (Caenorhabditis briggsae).